Reading from the N-terminus, the 676-residue chain is DNA ligase (676 aa).

Residues 41–45, 90–91, and glutamate 123 each bind NAD(+); these read DLTYD and SL. Lysine 125 (N6-AMP-lysine intermediate) is an active-site residue. Arginine 146, glutamate 180, lysine 293, and lysine 317 together coordinate NAD(+). Residues cysteine 408, cysteine 411, cysteine 424, and cysteine 429 each contribute to the Zn(2+) site.

This sequence belongs to the NAD-dependent DNA ligase family. LigA subfamily. It depends on Mg(2+) as a cofactor. Mn(2+) is required as a cofactor.

It carries out the reaction NAD(+) + (deoxyribonucleotide)n-3'-hydroxyl + 5'-phospho-(deoxyribonucleotide)m = (deoxyribonucleotide)n+m + AMP + beta-nicotinamide D-nucleotide.. Functionally, DNA ligase that catalyzes the formation of phosphodiester linkages between 5'-phosphoryl and 3'-hydroxyl groups in double-stranded DNA using NAD as a coenzyme and as the energy source for the reaction. It is essential for DNA replication and repair of damaged DNA. The protein is DNA ligase of Borrelia turicatae (strain 91E135).